The sequence spans 281 residues: Bifunctional protein FolD (281 aa).

NADP(+) is bound at residue 163-165 (GRS).

It belongs to the tetrahydrofolate dehydrogenase/cyclohydrolase family. Homodimer.

The catalysed reaction is (6R)-5,10-methylene-5,6,7,8-tetrahydrofolate + NADP(+) = (6R)-5,10-methenyltetrahydrofolate + NADPH. It catalyses the reaction (6R)-5,10-methenyltetrahydrofolate + H2O = (6R)-10-formyltetrahydrofolate + H(+). It functions in the pathway one-carbon metabolism; tetrahydrofolate interconversion. In terms of biological role, catalyzes the oxidation of 5,10-methylenetetrahydrofolate to 5,10-methenyltetrahydrofolate and then the hydrolysis of 5,10-methenyltetrahydrofolate to 10-formyltetrahydrofolate. The polypeptide is Bifunctional protein FolD (Leuconostoc mesenteroides subsp. mesenteroides (strain ATCC 8293 / DSM 20343 / BCRC 11652 / CCM 1803 / JCM 6124 / NCDO 523 / NBRC 100496 / NCIMB 8023 / NCTC 12954 / NRRL B-1118 / 37Y)).